We begin with the raw amino-acid sequence, 188 residues long: Peptidyl-tRNA hydrolase (188 aa).

Tyr14 contributes to the tRNA binding site. His19 acts as the Proton acceptor in catalysis. Residues Tyr64, Asn66, and Asn112 each contribute to the tRNA site.

Belongs to the PTH family. In terms of assembly, monomer.

The protein localises to the cytoplasm. It catalyses the reaction an N-acyl-L-alpha-aminoacyl-tRNA + H2O = an N-acyl-L-amino acid + a tRNA + H(+). Functionally, hydrolyzes ribosome-free peptidyl-tRNAs (with 1 or more amino acids incorporated), which drop off the ribosome during protein synthesis, or as a result of ribosome stalling. In terms of biological role, catalyzes the release of premature peptidyl moieties from peptidyl-tRNA molecules trapped in stalled 50S ribosomal subunits, and thus maintains levels of free tRNAs and 50S ribosomes. The chain is Peptidyl-tRNA hydrolase from Clostridium novyi (strain NT).